The following is a 322-amino-acid chain: CPX chromosomal region candidate gene 1 protein homolog (322 aa).

Composition is skewed to polar residues over residues 1–23 and 37–78; these read MTSS…NETP and TNIS…TQND. The interval 1–83 is disordered; the sequence is MTSSNQGNDP…MTQNDPPDEE (83 aa).

The protein is CPX chromosomal region candidate gene 1 protein homolog (Cpxcr1) of Mus musculus (Mouse).